The sequence spans 436 residues: ABC transporter permease YtrF (436 aa).

Positions 1–31 (MRFKDQVHFIRRNMKKNRLRVFMTILATTMA) are cleaved as a signal peptide. C32 is lipidated: N-palmitoyl cysteine. C32 is lipidated: S-diacylglycerol cysteine. The stretch at 115–165 (NMNDELKANMELEKGRVAKSENEIVVGYDFAKRLLTKKESEEYNKKIEEAK) forms a coiled coil. The next 3 membrane-spanning stretches (helical) occupy residues 293–313 (FKIG…IGIF), 350–370 (YIGI…SYLV), and 396–416 (IPAS…VISG).

This sequence belongs to the ABC-4 integral membrane protein family. As to quaternary structure, the complex is composed of 2 ATP-binding proteins (YtrB and YtrE), 2 transmembrane proteins (YtrC and YtrD) and a solute-binding protein (YtrF).

It localises to the cell membrane. In terms of biological role, part of the ABC transporter complex YtrBCDEF that plays a role in acetoin utilization during stationary phase and sporulation. The chain is ABC transporter permease YtrF (ytrF) from Bacillus subtilis (strain 168).